The sequence spans 296 residues: L-isoleucine 3(1)-dioxygenase (296 aa).

Positions 176, 178, and 267 each coordinate Fe cation.

This sequence belongs to the iron/ascorbate-dependent oxidoreductase family. It depends on L-ascorbate as a cofactor. The cofactor is Fe(2+).

It carries out the reaction L-isoleucine + 2-oxoglutarate + O2 = 3(1)-hydroxy-L-isoleucine + succinate + CO2. In terms of biological role, catalyzes the hydroxylation of L-isoleucine at the C-4' position to form L-4'-hydroxyisoleucine (4'-HIL). Exhibits low activity with L-valine and L-methionine. In Pantoea ananatis (strain AJ13355), this protein is L-isoleucine 3(1)-dioxygenase.